A 419-amino-acid polypeptide reads, in one-letter code: Light-independent protochlorophyllide reductase subunit N (419 aa).

Residues cysteine 17, cysteine 42, and cysteine 103 each contribute to the [4Fe-4S] cluster site.

It belongs to the BchN/ChlN family. Protochlorophyllide reductase is composed of three subunits; ChlL, ChlN and ChlB. Forms a heterotetramer of two ChlB and two ChlN subunits. Requires [4Fe-4S] cluster as cofactor.

The catalysed reaction is chlorophyllide a + oxidized 2[4Fe-4S]-[ferredoxin] + 2 ADP + 2 phosphate = protochlorophyllide a + reduced 2[4Fe-4S]-[ferredoxin] + 2 ATP + 2 H2O. The protein operates within porphyrin-containing compound metabolism; chlorophyll biosynthesis (light-independent). Component of the dark-operative protochlorophyllide reductase (DPOR) that uses Mg-ATP and reduced ferredoxin to reduce ring D of protochlorophyllide (Pchlide) to form chlorophyllide a (Chlide). This reaction is light-independent. The NB-protein (ChlN-ChlB) is the catalytic component of the complex. In Prochlorococcus marinus (strain NATL1A), this protein is Light-independent protochlorophyllide reductase subunit N.